Reading from the N-terminus, the 103-residue chain is Preprofallaxidin-6 (103 aa).

The signal sequence occupies residues 1 to 22 (MASLKKSLFLVLFLGFVSLSIC). A propeptide spanning residues 23–49 (EEEKRENEGNENEEEDENHEEGSEEKR) is cleaved from the precursor. Positions 24-50 (EEKRENEGNENEEEDENHEEGSEEKRG) are disordered. The segment covering 31–41 (GNENEEEDENH) has biased composition (acidic residues). L65 carries the leucine amide modification. Residues 67 to 103 (KRSEEKRYHPFGKRSEEKRYHPFGKRSEEKRYPPIGK) are disordered. The propeptide occupies 69–73 (SEEKR). F77 carries the post-translational modification Phenylalanine amide. Positions 81-85 (SEEKR) are excised as a propeptide. A Phenylalanine amide modification is found at F89. Residues 93 to 97 (SEEKR) constitute a propeptide that is removed on maturation. I101 carries the isoleucine amide modification.

It belongs to the frog skin active peptide (FSAP) family. Brevinin subfamily. In terms of tissue distribution, expressed by the skin glands.

It is found in the secreted. Fallaxidin-1.3 shows no antibacterial activity against Gram-positive or Gram-negative bacteria. Does not inhibit the formation of NO by neuronal nitric oxide synthase. Has no effect on splenocyte proliferation or smooth muscle contraction. Its function is as follows. Fallaxidin-1.4 shows no antibacterial activity against Gram-positive or Gram-negative bacteria. Does not inhibit the formation of NO by neuronal nitric oxide synthase. Has no effect on splenocyte proliferation or smooth muscle contraction. In terms of biological role, fallaxidin-3.1 shows antibacterial activity against the Gram-positive bacteria E.faecalis (MIC=100 uM) and L.lactis (MIC=100 uM). No antibacterial activity against the Gram-positive bacteria B.cereus, L.innocua, M.luteus, S.epidermidis, S.uberis and S.aureus, or the Gram-negative bacteria E.cloacae and E.coli. This Litoria fallax (Eastern dwarf tree frog) protein is Preprofallaxidin-6.